A 365-amino-acid polypeptide reads, in one-letter code: MQKLGIFIYSLGSGGAERVVATLLPILSLKFEVHLILMNDKISYEIPECQIHFLECSKPSENPILKFLKLPFLALKYKKLCRNLGIDTEFVFLNRPNYIALMARMFGNKTRLVINECTTPSVMYMKNNFNSLVNKFLISLLYPKADLILPNSKGNLEDLVQNFSISPKKCEILYNAIDLENIGQKALEDIALKDKFILSVGRLDKGKNHALLIRAYARLKTDLKLVILGEGVLKDELLALIKELNLEEKVLLLGFDNNPYKYMAKCEFFAFASVFEGFSNVLIESLACSCAVVCTDHKSGARELFGDDEFGLLVEVDNENSMFQGLKTMLEDDKLRKAYKNKAKTRAKAFDKVKIARDALKYLLG.

It belongs to the glycosyltransferase group 1 family.

It localises to the cell inner membrane. It carries out the reaction N-acetyl-alpha-D-galactosaminyl-(1-&gt;3)-N,N'-diacetyl-alpha-D-bacillosaminyl-tri-trans,hepta-cis-undecaprenyl diphosphate + UDP-N-acetyl-alpha-D-galactosamine = N-acetyl-alpha-D-galactosaminyl-(1-&gt;4)-N-acetyl-alpha-D-galactosaminyl-(1-&gt;3)-N,N'-diacetyl-alpha-D-bacillosaminyl-tri-trans,heptacis-undecaprenyl diphosphate + UDP + H(+). The protein operates within protein modification; protein glycosylation. Adds a GalNAc residue on to the Und-PP-Bac2,4diNAc-GalNAc disaccharide in the N-linked protein glycosylation pathway. Transfers the third sugar in the heptasaccharide biosynthesis. This is N-acetylgalactosamine-N,N'-diacetylbacillosaminyl-diphospho-undecaprenol 4-alpha-N-acetylgalactosaminyltransferase (pglJ) from Campylobacter jejuni subsp. jejuni serotype O:2 (strain ATCC 700819 / NCTC 11168).